The chain runs to 252 residues: Phosphate import ATP-binding protein PstB 1 (252 aa).

One can recognise an ABC transporter domain in the interval L6–I247. G38 to S45 contributes to the ATP binding site.

The protein belongs to the ABC transporter superfamily. Phosphate importer (TC 3.A.1.7) family. In terms of assembly, the complex is composed of two ATP-binding proteins (PstB), two transmembrane proteins (PstC and PstA) and a solute-binding protein (PstS).

It is found in the cell membrane. It catalyses the reaction phosphate(out) + ATP + H2O = ADP + 2 phosphate(in) + H(+). Functionally, part of the ABC transporter complex PstSACB involved in phosphate import. Responsible for energy coupling to the transport system. The sequence is that of Phosphate import ATP-binding protein PstB 1 from Streptococcus pneumoniae (strain ATCC BAA-255 / R6).